Reading from the N-terminus, the 135-residue chain is ATP synthase epsilon chain (135 aa).

The tract at residues 101–122 (TAVTKLEGQPSTPEKVKAQQLF) is disordered.

Belongs to the ATPase epsilon chain family. F-type ATPases have 2 components, CF(1) - the catalytic core - and CF(0) - the membrane proton channel. CF(1) has five subunits: alpha(3), beta(3), gamma(1), delta(1), epsilon(1). CF(0) has three main subunits: a, b and c.

It is found in the cellular thylakoid membrane. Its function is as follows. Produces ATP from ADP in the presence of a proton gradient across the membrane. The polypeptide is ATP synthase epsilon chain (Synechococcus sp. (strain CC9311)).